We begin with the raw amino-acid sequence, 123 residues long: Holo-[acyl-carrier-protein] synthase (123 aa).

Residues aspartate 8 and glutamate 56 each coordinate Mg(2+).

Belongs to the P-Pant transferase superfamily. AcpS family. Mg(2+) is required as a cofactor.

Its subcellular location is the cytoplasm. The enzyme catalyses apo-[ACP] + CoA = holo-[ACP] + adenosine 3',5'-bisphosphate + H(+). Transfers the 4'-phosphopantetheine moiety from coenzyme A to a Ser of acyl-carrier-protein. The protein is Holo-[acyl-carrier-protein] synthase of Treponema denticola (strain ATCC 35405 / DSM 14222 / CIP 103919 / JCM 8153 / KCTC 15104).